A 431-amino-acid chain; its full sequence is MLDIQLLRKDLDGVAKRLADRGYTLDVAAFAALEAERRETQTRTEEMQARRNSLSKQIGAMKGKGEDTSAVMAEVGGIGDEMKASAAKLDDIQKRLSELLQGVPNLPHESVPMGKDETGNVEVRRWGTPRQFDFEVKDHVDVGTPLGLDFETGAKLSGARFTMLRGQIARLHRALAQFMIDTHTQQHGYTEVYTPYIVNPEILYGTGQLPKFADDMFRVEKGGDENTVTQYLISTSEISLTNTVRDSILEADALPIKLTAHSPCFRSEAGSYGRDTRGLIRQHQFDKVEMVQIVAPETSYAALEEMVGHAETILQKLELPYRVITLCTGDMGFSAAKTYDLEVWVPAQNTYREISSCSNTESFQARRMQARYRNAQGKPELVHTLNGSGLAVGRTLVAVLENFQNADGSVTVPAALRPYLGGIERLEVAAG.

235–237 contacts L-serine; sequence TSE. An ATP-binding site is contributed by 266–268; that stretch reads RSE. Glu289 serves as a coordination point for L-serine. An ATP-binding site is contributed by 353–356; sequence EISS. Ser388 is a binding site for L-serine.

It belongs to the class-II aminoacyl-tRNA synthetase family. Type-1 seryl-tRNA synthetase subfamily. As to quaternary structure, homodimer. The tRNA molecule binds across the dimer.

The protein localises to the cytoplasm. The enzyme catalyses tRNA(Ser) + L-serine + ATP = L-seryl-tRNA(Ser) + AMP + diphosphate + H(+). It catalyses the reaction tRNA(Sec) + L-serine + ATP = L-seryl-tRNA(Sec) + AMP + diphosphate + H(+). Its pathway is aminoacyl-tRNA biosynthesis; selenocysteinyl-tRNA(Sec) biosynthesis; L-seryl-tRNA(Sec) from L-serine and tRNA(Sec): step 1/1. Its function is as follows. Catalyzes the attachment of serine to tRNA(Ser). Is also able to aminoacylate tRNA(Sec) with serine, to form the misacylated tRNA L-seryl-tRNA(Sec), which will be further converted into selenocysteinyl-tRNA(Sec). In Paraburkholderia phytofirmans (strain DSM 17436 / LMG 22146 / PsJN) (Burkholderia phytofirmans), this protein is Serine--tRNA ligase.